Consider the following 211-residue polypeptide: Large ribosomal subunit protein uL3 (211 aa).

Position 150 is an N5-methylglutamine (Gln-150).

This sequence belongs to the universal ribosomal protein uL3 family. As to quaternary structure, part of the 50S ribosomal subunit. Forms a cluster with proteins L14 and L19. In terms of processing, methylated by PrmB.

One of the primary rRNA binding proteins, it binds directly near the 3'-end of the 23S rRNA, where it nucleates assembly of the 50S subunit. The polypeptide is Large ribosomal subunit protein uL3 (Pseudomonas savastanoi pv. phaseolicola (strain 1448A / Race 6) (Pseudomonas syringae pv. phaseolicola (strain 1448A / Race 6))).